Here is a 263-residue protein sequence, read N- to C-terminus: MKNAFKDALKAGRPQIGLWLGLANSYSAELVAGAGFDWLLIDGEHAPNNVQTVLTQLQAIAPYPSQPVVRPSWNDPVQIKQLLDVGAQTLLVPMVQNADEARDAVAATRYPPAGIRGVGSALARASRWNRIPDYLHEANDAMCVLVQIETREAMSNLASILDVDGIDGVFIGPADLSADMGFAGNPQHPAVQAAIENAIVQIRAAGKAPGILMANEALAKRYLELGALFVAVGVDTTLLARGAEALAARFGAEKKLSGASGVY.

His45 (proton acceptor) is an active-site residue. Position 147 (Gln147) interacts with substrate. Glu149 contributes to the a divalent metal cation binding site. Substrate is bound by residues Ala174 and Asp175. Asp175 serves as a coordination point for a divalent metal cation.

This sequence belongs to the HpcH/HpaI aldolase family. Homohexamer; trimer of dimers. A divalent metal cation is required as a cofactor.

The catalysed reaction is 4-hydroxy-2-oxoheptanedioate = succinate semialdehyde + pyruvate. Its pathway is aromatic compound metabolism; 4-hydroxyphenylacetate degradation; pyruvate and succinate semialdehyde from 4-hydroxyphenylacetate: step 7/7. In terms of biological role, catalyzes the reversible retro-aldol cleavage of 4-hydroxy-2-ketoheptane-1,7-dioate (HKHD) to pyruvate and succinic semialdehyde. The protein is 4-hydroxy-2-oxo-heptane-1,7-dioate aldolase of Salmonella arizonae (strain ATCC BAA-731 / CDC346-86 / RSK2980).